Consider the following 86-residue polypeptide: Small ribosomal subunit protein bS16 (86 aa).

The protein belongs to the bacterial ribosomal protein bS16 family.

This chain is Small ribosomal subunit protein bS16, found in Bordetella avium (strain 197N).